We begin with the raw amino-acid sequence, 402 residues long: Exodeoxyribonuclease 7 large subunit (402 aa).

It belongs to the XseA family. As to quaternary structure, heterooligomer composed of large and small subunits.

The protein resides in the cytoplasm. The catalysed reaction is Exonucleolytic cleavage in either 5'- to 3'- or 3'- to 5'-direction to yield nucleoside 5'-phosphates.. Bidirectionally degrades single-stranded DNA into large acid-insoluble oligonucleotides, which are then degraded further into small acid-soluble oligonucleotides. This Streptomyces coelicolor (strain ATCC BAA-471 / A3(2) / M145) protein is Exodeoxyribonuclease 7 large subunit.